The sequence spans 204 residues: Ribonuclease HII (204 aa).

Residues 17 to 204 (QLVAGVDEVG…KPVQQLLQGD (188 aa)) enclose the RNase H type-2 domain. Residues Asp-23, Glu-24, and Asp-115 each contribute to the a divalent metal cation site.

This sequence belongs to the RNase HII family. The cofactor is Mn(2+). Requires Mg(2+) as cofactor.

It is found in the cytoplasm. It carries out the reaction Endonucleolytic cleavage to 5'-phosphomonoester.. Its function is as follows. Endonuclease that specifically degrades the RNA of RNA-DNA hybrids. This is Ribonuclease HII from Hahella chejuensis (strain KCTC 2396).